Reading from the N-terminus, the 463-residue chain is Hydroxyacid-oxoacid transhydrogenase, mitochondrial (463 aa).

This sequence belongs to the iron-containing alcohol dehydrogenase family. Hydroxyacid-oxoacid transhydrogenase subfamily.

It localises to the mitochondrion. The catalysed reaction is (S)-3-hydroxybutanoate + 2-oxoglutarate = (R)-2-hydroxyglutarate + acetoacetate. It carries out the reaction 4-hydroxybutanoate + 2-oxoglutarate = (R)-2-hydroxyglutarate + succinate semialdehyde. Functionally, catalyzes the cofactor-independent reversible oxidation of gamma-hydroxybutyrate (GHB) to succinic semialdehyde (SSA) coupled to reduction of 2-ketoglutarate (2-KG) to D-2-hydroxyglutarate (D-2-HG). L-3-hydroxybutyrate (L-3-OHB) is also a substrate for HOT when using 2-KG as hydrogen acceptor, resulting in the formation of D-2-HG. This Xenopus tropicalis (Western clawed frog) protein is Hydroxyacid-oxoacid transhydrogenase, mitochondrial (adhfe1).